We begin with the raw amino-acid sequence, 282 residues long: Transcription factor MYB1 (282 aa).

2 consecutive HTH myb-type domains span residues 9–61 and 62–116; these read KEGL…LNYL and RPDI…SKKV. 2 consecutive DNA-binding regions (H-T-H motif) follow at residues 37–61 and 89–112; these read WRDLPRRAGLKRCGKSCRLRWLNYL and WSLIAGRLPGRTDNEIKNYWNTYL. Residues 258–282 are disordered; the sequence is EDDWKQNGGKDELMGGGNGGPSSVS. Basic and acidic residues predominate over residues 260–270; the sequence is DWKQNGGKDEL. Residues 271-282 are compositionally biased toward gly residues; sequence MGGGNGGPSSVS.

Its subcellular location is the nucleus. Functionally, transcription activator involved in the spatiotemporal regulation of flavonoid biosynthesis specifically in the corms of Montbretia. Activates the promoters of enzymes involved in the biosynthesis of the flavonol kaempferol and the flavonol-glycoside kaempferol-rhamnoside. The chain is Transcription factor MYB1 from Crocosmia x crocosmiiflora (Montbretia).